The chain runs to 474 residues: ATP synthase subunit beta 2 (474 aa).

An ATP-binding site is contributed by 157-164 (GGAGVGKT).

It belongs to the ATPase alpha/beta chains family. As to quaternary structure, F-type ATPases have 2 components, CF(1) - the catalytic core - and CF(0) - the membrane proton channel. CF(1) has five subunits: alpha(3), beta(3), gamma(1), delta(1), epsilon(1). CF(0) has three main subunits: a(1), b(2) and c(9-12). The alpha and beta chains form an alternating ring which encloses part of the gamma chain. CF(1) is attached to CF(0) by a central stalk formed by the gamma and epsilon chains, while a peripheral stalk is formed by the delta and b chains.

It is found in the cell inner membrane. The enzyme catalyses ATP + H2O + 4 H(+)(in) = ADP + phosphate + 5 H(+)(out). Functionally, produces ATP from ADP in the presence of a proton gradient across the membrane. The catalytic sites are hosted primarily by the beta subunits. The protein is ATP synthase subunit beta 2 of Polaromonas naphthalenivorans (strain CJ2).